Consider the following 431-residue polypeptide: Glutamate-1-semialdehyde 2,1-aminomutase (431 aa).

Lysine 269 carries the N6-(pyridoxal phosphate)lysine modification.

The protein belongs to the class-III pyridoxal-phosphate-dependent aminotransferase family. HemL subfamily. In terms of assembly, homodimer. The cofactor is pyridoxal 5'-phosphate.

The protein resides in the cytoplasm. It catalyses the reaction (S)-4-amino-5-oxopentanoate = 5-aminolevulinate. It functions in the pathway porphyrin-containing compound metabolism; protoporphyrin-IX biosynthesis; 5-aminolevulinate from L-glutamyl-tRNA(Glu): step 2/2. The protein is Glutamate-1-semialdehyde 2,1-aminomutase of Francisella tularensis subsp. mediasiatica (strain FSC147).